Here is a 427-residue protein sequence, read N- to C-terminus: Serine--tRNA ligase (427 aa).

An L-serine-binding site is contributed by T231–E233. R262–E264 lines the ATP pocket. E285 serves as a coordination point for L-serine. E349–S352 contacts ATP. Position 385 (S385) interacts with L-serine.

It belongs to the class-II aminoacyl-tRNA synthetase family. Type-1 seryl-tRNA synthetase subfamily. In terms of assembly, homodimer. The tRNA molecule binds across the dimer.

It is found in the cytoplasm. It carries out the reaction tRNA(Ser) + L-serine + ATP = L-seryl-tRNA(Ser) + AMP + diphosphate + H(+). It catalyses the reaction tRNA(Sec) + L-serine + ATP = L-seryl-tRNA(Sec) + AMP + diphosphate + H(+). It functions in the pathway aminoacyl-tRNA biosynthesis; selenocysteinyl-tRNA(Sec) biosynthesis; L-seryl-tRNA(Sec) from L-serine and tRNA(Sec): step 1/1. In terms of biological role, catalyzes the attachment of serine to tRNA(Ser). Is also able to aminoacylate tRNA(Sec) with serine, to form the misacylated tRNA L-seryl-tRNA(Sec), which will be further converted into selenocysteinyl-tRNA(Sec). This chain is Serine--tRNA ligase, found in Allorhizobium ampelinum (strain ATCC BAA-846 / DSM 112012 / S4) (Agrobacterium vitis (strain S4)).